The following is a 599-amino-acid chain: Elongation factor 4 (599 aa).

Residues 4–186 (DNIRNFSIIA…EIVNKIPPPR (183 aa)) enclose the tr-type G domain. Residues 16–21 (DHGKST) and 133–136 (NKID) each bind GTP.

Belongs to the TRAFAC class translation factor GTPase superfamily. Classic translation factor GTPase family. LepA subfamily.

It is found in the cell inner membrane. It catalyses the reaction GTP + H2O = GDP + phosphate + H(+). Functionally, required for accurate and efficient protein synthesis under certain stress conditions. May act as a fidelity factor of the translation reaction, by catalyzing a one-codon backward translocation of tRNAs on improperly translocated ribosomes. Back-translocation proceeds from a post-translocation (POST) complex to a pre-translocation (PRE) complex, thus giving elongation factor G a second chance to translocate the tRNAs correctly. Binds to ribosomes in a GTP-dependent manner. This is Elongation factor 4 from Geotalea daltonii (strain DSM 22248 / JCM 15807 / FRC-32) (Geobacter daltonii).